A 232-amino-acid chain; its full sequence is 2,3,4,5-tetrahydropyridine-2,6-dicarboxylate N-acetyltransferase (232 aa).

Belongs to the transferase hexapeptide repeat family. DapH subfamily.

It carries out the reaction (S)-2,3,4,5-tetrahydrodipicolinate + acetyl-CoA + H2O = L-2-acetamido-6-oxoheptanedioate + CoA. Its pathway is amino-acid biosynthesis; L-lysine biosynthesis via DAP pathway; LL-2,6-diaminopimelate from (S)-tetrahydrodipicolinate (acetylase route): step 1/3. Functionally, catalyzes the transfer of an acetyl group from acetyl-CoA to tetrahydrodipicolinate. In Kosmotoga olearia (strain ATCC BAA-1733 / DSM 21960 / TBF 19.5.1), this protein is 2,3,4,5-tetrahydropyridine-2,6-dicarboxylate N-acetyltransferase.